Consider the following 183-residue polypeptide: Adenine phosphoribosyltransferase (183 aa).

Belongs to the purine/pyrimidine phosphoribosyltransferase family. Homodimer.

The protein localises to the cytoplasm. It catalyses the reaction AMP + diphosphate = 5-phospho-alpha-D-ribose 1-diphosphate + adenine. The protein operates within purine metabolism; AMP biosynthesis via salvage pathway; AMP from adenine: step 1/1. Its function is as follows. Catalyzes a salvage reaction resulting in the formation of AMP, that is energically less costly than de novo synthesis. The protein is Adenine phosphoribosyltransferase of Erwinia tasmaniensis (strain DSM 17950 / CFBP 7177 / CIP 109463 / NCPPB 4357 / Et1/99).